Reading from the N-terminus, the 559-residue chain is Tissue-type plasminogen activator (559 aa).

Residues 1–17 form the signal peptide; the sequence is MKRELLCVLLLCGLAFP. The propeptide occupies 18–29; it reads LPDQGIHGRFRR. A propeptide spans 30 to 32 (removed by plasmin); it reads GAR. The Fibronectin type-I domain occupies 36 to 78; sequence ATCRDEPTQTTYQQHQSWLRPMLRSSRVEYCRCNSGLVQCHSV. 17 cysteine pairs are disulfide-bonded: Cys-38–Cys-68, Cys-66–Cys-75, Cys-83–Cys-94, Cys-88–Cys-105, Cys-107–Cys-116, Cys-124–Cys-205, Cys-145–Cys-187, Cys-176–Cys-200, Cys-213–Cys-294, Cys-234–Cys-276, Cys-265–Cys-289, Cys-297–Cys-428, Cys-340–Cys-356, Cys-348–Cys-417, Cys-442–Cys-516, Cys-474–Cys-490, and Cys-506–Cys-534. An important for binding to annexin A2 region spans residues 39–49; sequence RDEPTQTTYQQ. The 39-residue stretch at 79–117 folds into the EGF-like domain; it reads PVRSCSEPRCFNGGTCQQALYFSDFVCQCPDGFVGKRCD. Kringle domains lie at 124–205 and 213–294; these read CFEE…TPAC and CYVG…MSPC. Residue Asn-149 is glycosylated (N-linked (GlcNAc...) asparagine). In terms of domain architecture, Peptidase S1 spans 309–558; sequence IKGGLYTDIT…YLDWIHDNMK (250 aa). Catalysis depends on charge relay system residues His-355 and Asp-404. A glycan (N-linked (GlcNAc...) asparagine) is linked at Asn-481. Residue Ser-510 is the Charge relay system of the active site.

It belongs to the peptidase S1 family. As to quaternary structure, heterodimer of chain A and chain B held by a disulfide bond. Binds to fibrin with high affinity. This interaction leads to an increase in the catalytic efficiency of the enzyme due to an increase in affinity for plasminogen. Similarly, binding to heparin increases the activation of plasminogen. Binds to annexin A2, cytokeratin-8, fibronectin and laminin. Binds to mannose receptor and the low-density lipoprotein receptor-related protein (LRP1); these proteins are involved in TPA clearance. Binds LRP1B; binding is followed by internalization and degradation. Forms heterodimer with SERPINA5. Interacts with SERPINE1. In complex with SERPINE1, interacts with SORL1. Post-translationally, the single chain, almost fully active enzyme, can be further processed into a two-chain fully active form by a cleavage after Arg-308 catalyzed by plasmin, tissue kallikrein or factor Xa.

The protein localises to the secreted. It localises to the extracellular space. It carries out the reaction Specific cleavage of Arg-|-Val bond in plasminogen to form plasmin.. Its activity is regulated as follows. Inhibited by SERPINA5. Inhibited by SERPINE1. Converts the abundant, but inactive, zymogen plasminogen to plasmin by hydrolyzing a single Arg-Val bond in plasminogen. By controlling plasmin-mediated proteolysis, it plays an important role in tissue remodeling and degradation, in cell migration and many other physiopathological events. During oocyte activation, plays a role in cortical granule reaction in the zona reaction, which contributes to the block to polyspermy. This chain is Tissue-type plasminogen activator (Plat), found in Mus musculus (Mouse).